The following is a 303-amino-acid chain: Aspartate carbamoyltransferase catalytic subunit (303 aa).

Carbamoyl phosphate is bound by residues Arg49 and Thr50. Lys77 is an L-aspartate binding site. The carbamoyl phosphate site is built by Arg99, His126, and Gln129. 2 residues coordinate L-aspartate: Arg159 and Arg211. 2 residues coordinate carbamoyl phosphate: Ser252 and Pro253.

Belongs to the aspartate/ornithine carbamoyltransferase superfamily. ATCase family. As to quaternary structure, heterododecamer (2C3:3R2) of six catalytic PyrB chains organized as two trimers (C3), and six regulatory PyrI chains organized as three dimers (R2).

The catalysed reaction is carbamoyl phosphate + L-aspartate = N-carbamoyl-L-aspartate + phosphate + H(+). It functions in the pathway pyrimidine metabolism; UMP biosynthesis via de novo pathway; (S)-dihydroorotate from bicarbonate: step 2/3. Catalyzes the condensation of carbamoyl phosphate and aspartate to form carbamoyl aspartate and inorganic phosphate, the committed step in the de novo pyrimidine nucleotide biosynthesis pathway. The chain is Aspartate carbamoyltransferase catalytic subunit from Listeria monocytogenes serotype 4b (strain F2365).